The following is a 304-amino-acid chain: Recombination-associated protein RdgC (304 aa).

It belongs to the RdgC family.

Its subcellular location is the cytoplasm. The protein localises to the nucleoid. In terms of biological role, may be involved in recombination. This Shewanella baltica (strain OS223) protein is Recombination-associated protein RdgC.